Consider the following 234-residue polypeptide: LexA repressor (234 aa).

A DNA-binding region (H-T-H motif) is located at residues 26–46; that stretch reads FEEMKEALDLKSKSGVHRLIS. The tract at residues 73–100 is disordered; sequence AVGKAAPVSQREAANTNSALPPLRAAPK. Positions 91–100 are enriched in low complexity; it reads ALPPLRAAPK. Active-site for autocatalytic cleavage activity residues include Ser154 and Lys192.

It belongs to the peptidase S24 family. Homodimer.

It catalyses the reaction Hydrolysis of Ala-|-Gly bond in repressor LexA.. In terms of biological role, represses a number of genes involved in the response to DNA damage (SOS response), including recA and lexA. In the presence of single-stranded DNA, RecA interacts with LexA causing an autocatalytic cleavage which disrupts the DNA-binding part of LexA, leading to derepression of the SOS regulon and eventually DNA repair. The protein is LexA repressor of Novosphingobium aromaticivorans (strain ATCC 700278 / DSM 12444 / CCUG 56034 / CIP 105152 / NBRC 16084 / F199).